A 25-amino-acid chain; its full sequence is Small ribosomal subunit protein eS32 (25 aa).

The interval Met-1 to Lys-25 is disordered.

Belongs to the eukaryotic ribosomal protein eS32 family. As to quaternary structure, component of the small ribosomal subunit.

This Spodoptera frugiperda (Fall armyworm) protein is Small ribosomal subunit protein eS32 (RpL41).